The chain runs to 77 residues: uncharacterized protein (77 aa).

This is an uncharacterized protein from Bacillus subtilis (strain 168).